Here is a 100-residue protein sequence, read N- to C-terminus: Small ribosomal subunit protein uS14c (100 aa).

Belongs to the universal ribosomal protein uS14 family. As to quaternary structure, part of the 30S ribosomal subunit.

It localises to the plastid. It is found in the chloroplast. Its function is as follows. Binds 16S rRNA, required for the assembly of 30S particles. This is Small ribosomal subunit protein uS14c from Lotus japonicus (Lotus corniculatus var. japonicus).